The primary structure comprises 112 residues: Cytochrome c 2.1 (112 aa).

Heme c is bound by residues Cys-20, Cys-23, His-24, and Met-85.

This sequence belongs to the cytochrome c family. In terms of processing, binds 1 heme c group covalently per subunit.

The protein localises to the mitochondrion intermembrane space. In terms of biological role, electron carrier protein. The oxidized form of the cytochrome c heme group can accept an electron from the heme group of the cytochrome c1 subunit of cytochrome reductase. Cytochrome c then transfers this electron to the cytochrome oxidase complex, the final protein carrier in the mitochondrial electron-transport chain. In Caenorhabditis briggsae, this protein is Cytochrome c 2.1.